A 701-amino-acid chain; its full sequence is CRS2-associated factor 1, chloroplastic (701 aa).

A chloroplast-targeting transit peptide spans 1 to 77; sequence MATSHLTSRS…ENGEPAAGVR (77 aa). CRM domains follow at residues 183–279 and 301–397; these read EPLT…TRPI and DGLT…LPPL. Positions 581 to 603 are CRS2 binding; the sequence is GILLLFKQAIDSGMALVLNENEF.

In terms of assembly, interacts with CRS2 and RNA. Part of large ribonucleo-protein complexes that include group IIB introns, CRS2 and CAF1.

It is found in the plastid. It localises to the chloroplast stroma. Its function is as follows. Required for the splicing of group IIB introns in chloroplasts. Forms splicing particles with CRS2. Interacts with RNA and confers intron specificity of the splicing particles. The polypeptide is CRS2-associated factor 1, chloroplastic (Oryza sativa subsp. japonica (Rice)).